The following is a 130-amino-acid chain: Large ribosomal subunit protein bL12 (130 aa).

The protein belongs to the bacterial ribosomal protein bL12 family. In terms of assembly, homodimer. Part of the ribosomal stalk of the 50S ribosomal subunit. Forms a multimeric L10(L12)X complex, where L10 forms an elongated spine to which 2 to 4 L12 dimers bind in a sequential fashion. Binds GTP-bound translation factors.

In terms of biological role, forms part of the ribosomal stalk which helps the ribosome interact with GTP-bound translation factors. Is thus essential for accurate translation. This Nostoc sp. (strain PCC 7120 / SAG 25.82 / UTEX 2576) protein is Large ribosomal subunit protein bL12.